We begin with the raw amino-acid sequence, 216 residues long: Talanin (216 aa).

As to expression, isoform 4 is expressed in placenta, lung, kidney and pancreas.

May play a role in uric acid excretion. The sequence is that of Talanin (ZNF365) from Homo sapiens (Human).